A 190-amino-acid polypeptide reads, in one-letter code: dCTP deaminase, dUMP-forming (190 aa).

Residues 101–106, Asp-119, 127–129, Gln-148, Tyr-162, and Gln-174 contribute to the dCTP site; these read KSSLGR and TLE. Residue Glu-129 is the Proton donor/acceptor of the active site. The segment at 162–184 is disordered; it reads YGSAKVGSKYQGQRGPTPSRSYQ. Over residues 171–184 the composition is skewed to polar residues; that stretch reads YQGQRGPTPSRSYQ.

Belongs to the dCTP deaminase family. Homotrimer.

The catalysed reaction is dCTP + 2 H2O = dUMP + NH4(+) + diphosphate. It functions in the pathway pyrimidine metabolism; dUMP biosynthesis; dUMP from dCTP: step 1/1. Bifunctional enzyme that catalyzes both the deamination of dCTP to dUTP and the hydrolysis of dUTP to dUMP without releasing the toxic dUTP intermediate. The polypeptide is dCTP deaminase, dUMP-forming (Mycobacterium sp. (strain JLS)).